A 334-amino-acid polypeptide reads, in one-letter code: Protein-glutamate methylesterase/protein-glutamine glutaminase 2 (334 aa).

Residues 2 to 120 (NIGIVNDLPL…GAAGDTTKLL (119 aa)) form the Response regulatory domain. A 4-aspartylphosphate modification is found at Asp-53. The CheB-type methylesterase domain maps to 134–334 (PGSSRLAGAA…AGELAALARI (201 aa)). Catalysis depends on residues Ser-157, His-184, and Asp-277.

This sequence belongs to the CheB family. Phosphorylated by CheA. Phosphorylation of the N-terminal regulatory domain activates the methylesterase activity.

The protein localises to the cytoplasm. It carries out the reaction [protein]-L-glutamate 5-O-methyl ester + H2O = L-glutamyl-[protein] + methanol + H(+). The catalysed reaction is L-glutaminyl-[protein] + H2O = L-glutamyl-[protein] + NH4(+). Functionally, involved in chemotaxis. Part of a chemotaxis signal transduction system that modulates chemotaxis in response to various stimuli. Catalyzes the demethylation of specific methylglutamate residues introduced into the chemoreceptors (methyl-accepting chemotaxis proteins or MCP) by CheR. Also mediates the irreversible deamidation of specific glutamine residues to glutamic acid. The chain is Protein-glutamate methylesterase/protein-glutamine glutaminase 2 from Burkholderia orbicola (strain AU 1054).